Consider the following 134-residue polypeptide: Large ribosomal subunit protein eL32 (134 aa).

Belongs to the eukaryotic ribosomal protein eL32 family.

The polypeptide is Large ribosomal subunit protein eL32 (RpL32) (Drosophila melanogaster (Fruit fly)).